Consider the following 729-residue polypeptide: Replication restart protein PriA (729 aa).

One can recognise a Helicase ATP-binding domain in the interval 209–376 (QTALGRFRSF…QSGAYRLLQL (168 aa)). Residue 222 to 229 (GITGSGKT) coordinates ATP. The DEAH box signature appears at 319-322 (DEEH). Positions 436, 439, 445, 448, 463, 466, 476, and 479 each coordinate Zn(2+). The 153-residue stretch at 471–623 (PIPFKCPDCG…YAVFAENELN (153 aa)) folds into the Helicase C-terminal domain.

The protein belongs to the helicase family. PriA subfamily. In terms of assembly, interacts with PriB with high affinity in the absence of DNA. Component of the replication restart primosome. The cofactor is Zn(2+).

The catalysed reaction is Couples ATP hydrolysis with the unwinding of duplex DNA by translocating in the 3'-5' direction.. The enzyme catalyses ATP + H2O = ADP + phosphate + H(+). Its activity is regulated as follows. Helicase and ATPase activities on forked DNA are stimulated by PriB; E.coli PriB does not stimulate this helicase. PriA:PriB complex-catalyzed duplex DNA winding is inhibited by CGS 15943 (CHEBI:131351). CGS 15943 decreases ATP hydrolysis and decreases PriA's affinity for DNA. Functionally, initiates the restart of stalled replication forks, which reloads the replicative helicase on sites other than the origin of replication. Recognizes and binds to abandoned replication forks and remodels them to uncover a helicase loading site. Promotes assembly of the primosome at these replication forks. In terms of biological role, DNA helicase with greatest unwinding activity on forked DNA substrates with relatively short duplex lagging strand arms. A DNA-dependent ATPase. Required for DNA transformation and DNA repair. Binds single-stranded (ss)DNA and replication fork-like DNA but not double-stranded (ds)DNA. This chain is Replication restart protein PriA, found in Neisseria gonorrhoeae (strain ATCC 700825 / FA 1090).